Reading from the N-terminus, the 466-residue chain is Na(+)/H(+) antiporter NhaA (466 aa).

11 helical membrane-spanning segments follow: residues 32–52 (VGGVLLLLAAITALIWANVPA), 74–94 (LSVQHWAADGLLAVFFFVAGI), 111–131 (AALPVAAALCGMAVPALVYTL), 142–162 (GWAVPTATDIAFALAVLAVIG), 172–192 (FLLTLAVVDDLFAILIIAVFF), 195–215 (DLNFAALAGAVIGLAVFWLLL), 221–241 (GWYVYVPLALVIWGLMYNSGI), 280–300 (GLAVPLFALFSAGVVISGGAL), 310–330 (LGVVLGLVVGKAIGIFGGTWL), 348–368 (VFAVASLAGIGFTVSLLIGEL), and 379–399 (EVKAAVLTGSLLAALIATTLL).

Belongs to the NhaA Na(+)/H(+) (TC 2.A.33) antiporter family.

Its subcellular location is the cell membrane. The catalysed reaction is Na(+)(in) + 2 H(+)(out) = Na(+)(out) + 2 H(+)(in). Na(+)/H(+) antiporter that extrudes sodium in exchange for external protons. The polypeptide is Na(+)/H(+) antiporter NhaA (Streptomyces avermitilis (strain ATCC 31267 / DSM 46492 / JCM 5070 / NBRC 14893 / NCIMB 12804 / NRRL 8165 / MA-4680)).